Consider the following 415-residue polypeptide: Nuclear hormone receptor family member nhr-153 (415 aa).

The nuclear receptor DNA-binding region spans 26–105 (PSVCQICRNP…AGMNPMAIQA (80 aa)). NR C4-type zinc fingers lie at residues 29–49 (CQIC…CNGC) and 65–88 (CFKV…CRAC). The NR LBD domain occupies 170-406 (DQRDLSTALS…DPEVLKKKCI (237 aa)).

Belongs to the nuclear hormone receptor family.

The protein localises to the nucleus. Its function is as follows. Orphan nuclear receptor. This Caenorhabditis elegans protein is Nuclear hormone receptor family member nhr-153 (nhr-153).